A 289-amino-acid chain; its full sequence is ATP synthase gamma chain (289 aa).

This sequence belongs to the ATPase gamma chain family. F-type ATPases have 2 components, CF(1) - the catalytic core - and CF(0) - the membrane proton channel. CF(1) has five subunits: alpha(3), beta(3), gamma(1), delta(1), epsilon(1). CF(0) has three main subunits: a, b and c.

Its subcellular location is the cell membrane. Produces ATP from ADP in the presence of a proton gradient across the membrane. The gamma chain is believed to be important in regulating ATPase activity and the flow of protons through the CF(0) complex. The chain is ATP synthase gamma chain from Hamiltonella defensa subsp. Acyrthosiphon pisum (strain 5AT).